The chain runs to 132 residues: D-ribose pyranase (132 aa).

The active-site Proton donor is histidine 20. Substrate is bound by residues aspartate 28, histidine 99, and 121-123; that span reads YSN.

The protein belongs to the RbsD / FucU family. RbsD subfamily. In terms of assembly, homodecamer.

The protein resides in the cytoplasm. The catalysed reaction is beta-D-ribopyranose = beta-D-ribofuranose. The protein operates within carbohydrate metabolism; D-ribose degradation; D-ribose 5-phosphate from beta-D-ribopyranose: step 1/2. In terms of biological role, catalyzes the interconversion of beta-pyran and beta-furan forms of D-ribose. The polypeptide is D-ribose pyranase (Streptococcus uberis (strain ATCC BAA-854 / 0140J)).